The sequence spans 336 residues: Aspartate--ammonia ligase (336 aa).

It belongs to the class-II aminoacyl-tRNA synthetase family. AsnA subfamily.

The protein resides in the cytoplasm. The enzyme catalyses L-aspartate + NH4(+) + ATP = L-asparagine + AMP + diphosphate + H(+). Its pathway is amino-acid biosynthesis; L-asparagine biosynthesis; L-asparagine from L-aspartate (ammonia route): step 1/1. The sequence is that of Aspartate--ammonia ligase from Limosilactobacillus fermentum (strain NBRC 3956 / LMG 18251) (Lactobacillus fermentum).